The chain runs to 118 residues: Large ribosomal subunit protein mL53 (118 aa).

The segment at 99–118 (AAAASAPGADKVAPGTSTRR) is disordered.

It belongs to the mitochondrion-specific ribosomal protein mL53 family. As to quaternary structure, component of the mitochondrial ribosome large subunit (39S) which comprises a 16S rRNA and about 50 distinct proteins.

It localises to the mitochondrion. This is Large ribosomal subunit protein mL53 (Mrpl53) from Mus musculus (Mouse).